Consider the following 548-residue polypeptide: Aspergilol synthase AuAP450 (548 aa).

A helical transmembrane segment spans residues Pro-38–Ser-58. Position 489 (Cys-489) interacts with heme.

Belongs to the cytochrome P450 family. Heme is required as a cofactor.

The protein localises to the membrane. The protein operates within secondary metabolite biosynthesis; terpenoid biosynthesis. In terms of biological role, cytochrome P450 monooxygenase; part of the gene cluster that mediates the biosynthesis of aspergiltriene A, aspergildienes A-D and aspergilols A-D. The bifunctional terpene synthase AuAS converts DMAPP and IPP into sesterterpenes. The C-terminal prenyltransferase (PT) domain of AuAS catalyzes formation of GFPP, whereas the N-terminal terpene cyclase (TC) domain catalyzes the cyclization of GFPP into 5 distinct sesterterpenes: aspergiltriene A, aspergildiene A, aspergildiene B, aspergildiene C and aspergildiene D. The cytochrome P450 monooxygenase AP450 then hydroxylates the aspergildienes A, B, C and D to yield the corresponding sesterterpene alcohols, aspergilols A-D. The sequence is that of Aspergilol synthase AuAP450 from Aspergillus ustus.